Reading from the N-terminus, the 351-residue chain is uncharacterized protein (351 aa).

This sequence belongs to the bacterial luciferase oxidoreductase family.

This is an uncharacterized protein from Sinorhizobium fredii (strain NBRC 101917 / NGR234).